Consider the following 729-residue polypeptide: Fatty acid oxidation complex subunit alpha (729 aa).

Positions 1–189 (MLYKGDTLYL…KIGLVDGVVA (189 aa)) are enoyl-CoA hydratase/isomerase. Asp-296 lines the substrate pocket. A 3-hydroxyacyl-CoA dehydrogenase region spans residues 311–729 (ETPKHAAVLG…ARPVGALKTA (419 aa)). NAD(+) is bound by residues Met-324, Asp-343, 400 to 402 (VVE), Lys-407, and Ser-429. His-450 acts as the For 3-hydroxyacyl-CoA dehydrogenase activity in catalysis. Residue Asn-453 participates in NAD(+) binding. Asn-500 and Tyr-660 together coordinate substrate.

It in the N-terminal section; belongs to the enoyl-CoA hydratase/isomerase family. This sequence in the C-terminal section; belongs to the 3-hydroxyacyl-CoA dehydrogenase family. Heterotetramer of two alpha chains (FadB) and two beta chains (FadA).

The enzyme catalyses a (3S)-3-hydroxyacyl-CoA + NAD(+) = a 3-oxoacyl-CoA + NADH + H(+). The catalysed reaction is a (3S)-3-hydroxyacyl-CoA = a (2E)-enoyl-CoA + H2O. It carries out the reaction a 4-saturated-(3S)-3-hydroxyacyl-CoA = a (3E)-enoyl-CoA + H2O. It catalyses the reaction (3S)-3-hydroxybutanoyl-CoA = (3R)-3-hydroxybutanoyl-CoA. The enzyme catalyses a (3Z)-enoyl-CoA = a 4-saturated (2E)-enoyl-CoA. The catalysed reaction is a (3E)-enoyl-CoA = a 4-saturated (2E)-enoyl-CoA. The protein operates within lipid metabolism; fatty acid beta-oxidation. Its function is as follows. Involved in the aerobic and anaerobic degradation of long-chain fatty acids via beta-oxidation cycle. Catalyzes the formation of 3-oxoacyl-CoA from enoyl-CoA via L-3-hydroxyacyl-CoA. It can also use D-3-hydroxyacyl-CoA and cis-3-enoyl-CoA as substrate. This chain is Fatty acid oxidation complex subunit alpha, found in Klebsiella pneumoniae (strain 342).